A 904-amino-acid polypeptide reads, in one-letter code: Pantothenate kinase 2 (904 aa).

The interval 1–56 (MAANNNSDPILDEGGGGGVKHEAVGEAGEGKGGGGGAAATQAPAAMLPRSGSRPQL) is disordered. The tract at residues 1–472 (MAANNNSDPI…LGDLNEKISW (472 aa)) is pantothenate kinase. A 4'-phosphopantetheine phosphatase region spans residues 473–904 (MEKFVQKGTQ…DCICKFEPVP (432 aa)). Residues Asp735, Asn736, and Asp771 each contribute to the Mn(2+) site. Positions 855-859 (EGMGR) match the Subfamily II EGMGR motif motif.

In the N-terminal section; belongs to the type II pantothenate kinase family. This sequence in the C-terminal section; belongs to the damage-control phosphatase family. Phosphopantetheine phosphatase II subfamily. It depends on Mn(2+) as a cofactor. The cofactor is Ni(2+).

The enzyme catalyses (R)-pantothenate + ATP = (R)-4'-phosphopantothenate + ADP + H(+). It carries out the reaction (R)-4'-phosphopantothenate + H2O = (R)-pantothenate + phosphate. The catalysed reaction is (R)-4'-phosphopantetheine + H2O = (R)-pantetheine + phosphate. It catalyses the reaction (R)-4'-phosphopantetheine sulfonate + H2O = (R)-pantetheine sulfonate + phosphate. Its pathway is cofactor biosynthesis; coenzyme A biosynthesis; CoA from (R)-pantothenate: step 1/5. In terms of biological role, catalyzes the phosphorylation of pantothenate the first step in CoA biosynthesis. May play a role in the physiological regulation of the intracellular CoA concentration. Functionally redudant with PANK1. The phosphatase activity shows preference for normal or oxidatively damaged intermediates of 4'-phosphopantetheine, which provides strong indirect evidence that the phosphatase activity pre-empts damage in the CoA pathway. Hydrolyzing excess 4'-phosphopantetheine could constitute a directed overflow mechanism to prevent its oxidation to the S-sulfonate, sulfonate, or other forms. Hydrolyzing 4'-phosphopantetheine sulfonate or S-sulfonate would forestall their conversion to inactive forms of CoA and acyl carrier protein. The polypeptide is Pantothenate kinase 2 (Oryza sativa subsp. japonica (Rice)).